We begin with the raw amino-acid sequence, 168 residues long: Endoribonuclease YbeY (168 aa).

Residues histidine 123, histidine 127, and histidine 133 each contribute to the Zn(2+) site.

It belongs to the endoribonuclease YbeY family. Zn(2+) is required as a cofactor.

It is found in the cytoplasm. Single strand-specific metallo-endoribonuclease involved in late-stage 70S ribosome quality control and in maturation of the 3' terminus of the 16S rRNA. This chain is Endoribonuclease YbeY, found in Francisella tularensis subsp. holarctica (strain LVS).